Reading from the N-terminus, the 769-residue chain is Protein transport protein sec39 (769 aa).

This sequence belongs to the SEC39 family. In terms of assembly, component of a peripheral membrane protein complex consisting of dsl1, sec39 and tip20.

The protein resides in the endoplasmic reticulum membrane. Functionally, required for protein transport between the Golgi and the endoplasmic reticulum. May contribute to tethering of coatomer-coated retrograde transport vesicles to the ER membrane through interaction with and stabilization of the SNARE complex. This is Protein transport protein sec39 from Schizosaccharomyces pombe (strain 972 / ATCC 24843) (Fission yeast).